Reading from the N-terminus, the 448-residue chain is MSFTPGKQSSSRASSGNRSGNGILKWADQSDQSRNVQTRGRRAQPKQTATSQQPSGGNVVPYYSWFSGITQFQKGKEFEFAEGQGVPIAPGVPATEAKGYWYRHNRRSFKTADGNQRQLLPRWYFYYLGTGPHAKDQYGTDIDGVFWVASNQADVNTPADILDRDPSSDEAIPTRFPPGTVLPQGYYIEGSGRSAPNSRSTSRASSRASSAGSRSRANSGNRTPTSGVTPDMADQIASLVLAKLGKDATKPQQVTKQTAKEIRQKILNKPRQKRSPNKQCTVQQCFGKRGPNQNFGGGEMLKLGTSDPQFPILAELAPTAGAFFFGSRLELAKVQNLSGNLDEPQKDVYELRYNGAIRFDSTLSGFETIMKVLNENLNAYQQQDGMMNMSPKPQRQRGQKNGQGENDNISVAAPKSRVQQNKSRELTAEDISLLKKMDEPYTEDTSEI.

The interval 1–55 (MSFTPGKQSSSRASSGNRSGNGILKWADQSDQSRNVQTRGRRAQPKQTATSQQPS) is disordered. Over residues 9–22 (SSSRASSGNRSGNG) the composition is skewed to low complexity. Composition is skewed to polar residues over residues 29–38 (QSDQSRNVQT) and 45–55 (PKQTATSQQPS). The interval 52–194 (QQPSGGNVVP…GYYIEGSGRS (143 aa)) is RNA-binding. The CoV N NTD domain maps to 61 to 190 (PYYSWFSGIT…VLPQGYYIEG (130 aa)). Residues arginine 106, arginine 122, and arginine 164 each coordinate RNA. Disordered regions lie at residues 157-231 (TPAD…VTPD), 266-297 (ILNKPRQKRSPNKQCTVQQCFGKRGPNQNFGG), and 385-448 (GMMN…TSEI). Serine 167 carries the post-translational modification Phosphoserine; by host. Threonine 174 carries the phosphothreonine; by host modification. Serine 191 is modified (phosphoserine; by host). The segment covering 193-223 (RSAPNSRSTSRASSRASSAGSRSRANSGNRT) has biased composition (low complexity). Positions 259–384 (AKEIRQKILN…ENLNAYQQQD (126 aa)) constitute a CoV N CTD domain. Positions 266-276 (ILNKPRQKRSP) are enriched in basic residues. Residues 266–384 (ILNKPRQKRS…ENLNAYQQQD (119 aa)) are dimerization. Serine 390 bears the Phosphoserine; by host mark. Over residues 399-409 (QKNGQGENDNI) the composition is skewed to polar residues. The segment covering 422-439 (KSRELTAEDISLLKKMDE) has biased composition (basic and acidic residues). Residue serine 423 is modified to Phosphoserine; by host. Threonine 427 is modified (phosphothreonine; by host).

This sequence belongs to the betacoronavirus nucleocapsid protein family. As to quaternary structure, homooligomer. Both monomeric and oligomeric forms interact with RNA. Interacts with protein M. Interacts with NSP3; this interaction serves to tether the genome to the newly translated replicase-transcriptase complex at a very early stage of infection. In terms of processing, ADP-ribosylated. The ADP-ribosylation is retained in the virion during infection. Phosphorylated on serine and threonine residues.

The protein resides in the virion. The protein localises to the host endoplasmic reticulum-Golgi intermediate compartment. It localises to the host Golgi apparatus. Packages the positive strand viral genome RNA into a helical ribonucleocapsid (RNP) and plays a fundamental role during virion assembly through its interactions with the viral genome and membrane protein M. Plays an important role in enhancing the efficiency of subgenomic viral RNA transcription as well as viral replication. The protein is Nucleoprotein of Bovine coronavirus (strain OK-0514) (BCoV).